Here is a 360-residue protein sequence, read N- to C-terminus: MKASLLNKLDVLSDRFEELTALLGDAEVISDQTRFRAYSREYAEVEPVVALYQQLIRVQGDLEGAQALLKDSDPDMREMAVEEVRETKQQLVELEAQLQRMLLPKDPNDGRNVFLEIRAGTGGDEAAIFSGDLFRMYSRYAERRGWRVEILSENEGEHGGYKEVIARVEGDSVYGKLKFESGAHRVQRVPETESQGRIHTSACTVAVLPEPDEQQAIEINPADLRVDTYRSSGAGGQHVNKTDSAIRITHLPSGIVVECQEERSQHKNRARAMSWLSAKLNDQQTSAAANAIASERKLLVGSGDRSERIRTYNFPQGRVTDHRVNLTLYSLDEVLAGGVDAVIEPLLAEYQADQLAALGE.

Gln237 is subject to N5-methylglutamine.

This sequence belongs to the prokaryotic/mitochondrial release factor family. Post-translationally, methylated by PrmC. Methylation increases the termination efficiency of RF1.

It is found in the cytoplasm. Functionally, peptide chain release factor 1 directs the termination of translation in response to the peptide chain termination codons UAG and UAA. The polypeptide is Peptide chain release factor 1 (Pseudomonas savastanoi pv. phaseolicola (strain 1448A / Race 6) (Pseudomonas syringae pv. phaseolicola (strain 1448A / Race 6))).